A 299-amino-acid polypeptide reads, in one-letter code: Protoheme IX farnesyltransferase (299 aa).

The next 9 helical transmembrane spans lie at 25–45, 47–67, 95–115, 119–139, 147–167, 173–193, 218–238, 243–263, and 277–297; these read VVLL…RAGV, WTVL…AAAV, AAAL…LLTF, LAAW…TGFL, IVIG…AVTG, PLLL…ALAI, VHIL…FAIH, LYLA…IALY, and FSIW…YLLL.

The protein belongs to the UbiA prenyltransferase family. Protoheme IX farnesyltransferase subfamily.

It is found in the cell inner membrane. It catalyses the reaction heme b + (2E,6E)-farnesyl diphosphate + H2O = Fe(II)-heme o + diphosphate. It functions in the pathway porphyrin-containing compound metabolism; heme O biosynthesis; heme O from protoheme: step 1/1. Converts heme B (protoheme IX) to heme O by substitution of the vinyl group on carbon 2 of heme B porphyrin ring with a hydroxyethyl farnesyl side group. This is Protoheme IX farnesyltransferase from Stutzerimonas stutzeri (strain A1501) (Pseudomonas stutzeri).